Here is a 293-residue protein sequence, read N- to C-terminus: Formamidopyrimidine-DNA glycosylase (293 aa).

Residue Pro2 is the Schiff-base intermediate with DNA of the active site. The Proton donor role is filled by Glu3. Catalysis depends on Lys58, which acts as the Proton donor; for beta-elimination activity. DNA is bound by residues His104, Arg123, and Arg166. The FPG-type zinc-finger motif lies at 257-293 (QVYDREGDKCRTPACKGAVKRFTQNGRSTFWCPVCQT). The active-site Proton donor; for delta-elimination activity is the Arg283.

This sequence belongs to the FPG family. Monomer. It depends on Zn(2+) as a cofactor.

The catalysed reaction is Hydrolysis of DNA containing ring-opened 7-methylguanine residues, releasing 2,6-diamino-4-hydroxy-5-(N-methyl)formamidopyrimidine.. It catalyses the reaction 2'-deoxyribonucleotide-(2'-deoxyribose 5'-phosphate)-2'-deoxyribonucleotide-DNA = a 3'-end 2'-deoxyribonucleotide-(2,3-dehydro-2,3-deoxyribose 5'-phosphate)-DNA + a 5'-end 5'-phospho-2'-deoxyribonucleoside-DNA + H(+). Involved in base excision repair of DNA damaged by oxidation or by mutagenic agents. Acts as a DNA glycosylase that recognizes and removes damaged bases. Has a preference for oxidized purines, such as 7,8-dihydro-8-oxoguanine (8-oxoG). Has AP (apurinic/apyrimidinic) lyase activity and introduces nicks in the DNA strand. Cleaves the DNA backbone by beta-delta elimination to generate a single-strand break at the site of the removed base with both 3'- and 5'-phosphates. This chain is Formamidopyrimidine-DNA glycosylase, found in Nitrobacter winogradskyi (strain ATCC 25391 / DSM 10237 / CIP 104748 / NCIMB 11846 / Nb-255).